The chain runs to 571 residues: Proline--tRNA ligase (571 aa).

Belongs to the class-II aminoacyl-tRNA synthetase family. ProS type 1 subfamily. Homodimer.

It is found in the cytoplasm. The enzyme catalyses tRNA(Pro) + L-proline + ATP = L-prolyl-tRNA(Pro) + AMP + diphosphate. Catalyzes the attachment of proline to tRNA(Pro) in a two-step reaction: proline is first activated by ATP to form Pro-AMP and then transferred to the acceptor end of tRNA(Pro). As ProRS can inadvertently accommodate and process non-cognate amino acids such as alanine and cysteine, to avoid such errors it has two additional distinct editing activities against alanine. One activity is designated as 'pretransfer' editing and involves the tRNA(Pro)-independent hydrolysis of activated Ala-AMP. The other activity is designated 'posttransfer' editing and involves deacylation of mischarged Ala-tRNA(Pro). The misacylated Cys-tRNA(Pro) is not edited by ProRS. The sequence is that of Proline--tRNA ligase from Shewanella baltica (strain OS185).